A 308-amino-acid chain; its full sequence is Porphobilinogen deaminase (308 aa).

Cysteine 241 bears the S-(dipyrrolylmethanemethyl)cysteine mark.

This sequence belongs to the HMBS family. In terms of assembly, monomer. The cofactor is dipyrromethane.

It catalyses the reaction 4 porphobilinogen + H2O = hydroxymethylbilane + 4 NH4(+). It functions in the pathway porphyrin-containing compound metabolism; protoporphyrin-IX biosynthesis; coproporphyrinogen-III from 5-aminolevulinate: step 2/4. In terms of biological role, tetrapolymerization of the monopyrrole PBG into the hydroxymethylbilane pre-uroporphyrinogen in several discrete steps. This Staphylococcus aureus (strain MRSA252) protein is Porphobilinogen deaminase.